The following is a 471-amino-acid chain: MKMPKAIGLVHFIGIGGIGMSGIAEVLHNLGHRVQGSDQADSANVQRLRDKGIEVFVGHTADNLGDAEVVVVSTAIKKNNPELIAAREKHLPIVRRAEMLAELMRFRNAIAIGGTHGKTTTTSMVATLLEAGNLDPTVINGGIINAYGTNARMGEGEWMVVEADESDGTFLKLPADVAVITNIDPEHLDHYGNFDAVRAAFRQFVENVPFYGFGVMCLDHPEVQALVGRIEDRKVITYGENPQADVRFSNVRIDGTRSIFDVEIRRRRTGKIFSFKDLVLPMPGRHNVSNATAAIAVANRLGISEADIKKGLASFAGVKRRFTLTGEANGVQVFDDYGHHPVEIKAVLAAAREACKGRIIAVHQPHRYSRLSSLFDDFAHCFNDADTILLAPVYAAGEDPIEGASSEALVSAIKAAGHRDARFLEKREDLASQVAAIANPGDFVVLLGAGNITQWAAALPSELKSISGKSE.

Residue 114–120 (GTHGKTT) coordinates ATP.

It belongs to the MurCDEF family.

Its subcellular location is the cytoplasm. The catalysed reaction is UDP-N-acetyl-alpha-D-muramate + L-alanine + ATP = UDP-N-acetyl-alpha-D-muramoyl-L-alanine + ADP + phosphate + H(+). Its pathway is cell wall biogenesis; peptidoglycan biosynthesis. Its function is as follows. Cell wall formation. The protein is UDP-N-acetylmuramate--L-alanine ligase of Agrobacterium fabrum (strain C58 / ATCC 33970) (Agrobacterium tumefaciens (strain C58)).